The sequence spans 153 residues: Coiled-coil-helix-coiled-coil-helix domain-containing protein 2 (153 aa).

2 disordered regions span residues 1 to 51 (MPRG…AAPR) and 78 to 106 (HAITGGFSGGGSAEPAKPDITYQEPQGAQ). The segment covering 14–51 (PPASRAPQMRAAPRRAPAAQPPAAAAPSAVGSPAAAPR) has biased composition (low complexity). Residues 113–153 (FGPCSLEIKQFLECAQNQSDVKLCEGFNEVLRQCRIANGLM) form the CHCH domain. Short sequence motifs (cx9C motif) lie at residues 116–126 (CSLEIKQFLEC) and 136–146 (CEGFNEVLRQC). Cystine bridges form between Cys-116–Cys-146 and Cys-126–Cys-136.

In terms of assembly, interacts with RBPJ.

It localises to the nucleus. The protein resides in the mitochondrion. The protein localises to the mitochondrion intermembrane space. Its function is as follows. Transcription factor. Binds to the oxygen responsive element of COX4I2 and activates its transcription under hypoxia conditions (4% oxygen), as well as normoxia conditions (20% oxygen). This is Coiled-coil-helix-coiled-coil-helix domain-containing protein 2 (Chchd2) from Mus musculus (Mouse).